The sequence spans 715 residues: Serine/arginine repetitive matrix protein 5 (715 aa).

Low complexity predominate over residues 1 to 13 (MSSPKRSSKPSMS). The interval 1–715 (MSSPKRSSKP…RSSSSSSKLA (715 aa)) is disordered. Polar residues predominate over residues 32–59 (LKSTKSATPNRSLVPTKPATSRNSVMSP). Low complexity predominate over residues 60-79 (SSSKSTKSTSTKRAPSNRPS). A compositionally biased stretch (basic residues) spans 80–90 (SRSRVRSKART). Residues 92 to 104 (SRVSTDTRTSKAS) show a composition bias toward polar residues. The segment covering 112–136 (HQRRGTHSRGRTPGRRGSRSSKRSP) has biased composition (basic residues). Composition is skewed to polar residues over residues 213–224 (TPSTAKCQTPTG) and 257–272 (YSPTEMSSRVKSYNQA). Residues 273-285 (STRSRPQSHSQSR) are compositionally biased toward low complexity. Positions 286–320 (SPRRSRSGSQKRTHSRVRSHSWKRNHSRARSRTRK) are enriched in basic residues. Basic and acidic residues-rich tracts occupy residues 359-388 (PSKERSHSHSRSSSKERDHRGSSSPRKESG) and 397-521 (KQRD…ERDH). Basic residues predominate over residues 522 to 536 (RRSRSPSKERQRRQS). Basic and acidic residues-rich tracts occupy residues 539 to 595 (PNKE…DHSR) and 611 to 628 (SSKEKAHSRSRTPSKEGN). Residues 657–666 (TRTSSLSQNR) show a composition bias toward polar residues. A compositionally biased stretch (low complexity) spans 667–681 (TPSKTSSHSPSTFPS). Polar residues predominate over residues 682-715 (GGQTLSQDDSQADATTSKATLPGERSSSSSSKLA).

In Homo sapiens (Human), this protein is Serine/arginine repetitive matrix protein 5 (SRRM5).